The sequence spans 433 residues: Glutamyl-tRNA reductase (433 aa).

Substrate contacts are provided by residues 49-52 (TCNR), Ser-109, 114-116 (EGQ), and Gln-120. Catalysis depends on Cys-50, which acts as the Nucleophile. 198–203 (GAGRMS) serves as a coordination point for NADP(+).

It belongs to the glutamyl-tRNA reductase family. As to quaternary structure, homodimer.

The catalysed reaction is (S)-4-amino-5-oxopentanoate + tRNA(Glu) + NADP(+) = L-glutamyl-tRNA(Glu) + NADPH + H(+). It functions in the pathway porphyrin-containing compound metabolism; protoporphyrin-IX biosynthesis; 5-aminolevulinate from L-glutamyl-tRNA(Glu): step 1/2. Its pathway is porphyrin-containing compound metabolism; chlorophyll biosynthesis. Catalyzes the NADPH-dependent reduction of glutamyl-tRNA(Glu) to glutamate 1-semialdehyde (GSA). This chain is Glutamyl-tRNA reductase, found in Prochlorococcus marinus subsp. pastoris (strain CCMP1986 / NIES-2087 / MED4).